The sequence spans 285 residues: Sulfotransferase 2A6 (285 aa).

Residue 44–49 (KSGTNW) coordinates 3'-phosphoadenylyl sulfate. The Proton acceptor role is filled by His99. 3'-phosphoadenylyl sulfate-binding positions include Arg121, Ser129, Tyr184, 218 to 223 (SSFQAM), and 247 to 249 (RKG).

This sequence belongs to the sulfotransferase 1 family. As to quaternary structure, oligomer.

Its subcellular location is the cytoplasm. It localises to the cytosol. It carries out the reaction an alcohol + 3'-phosphoadenylyl sulfate = an alkyl sulfate + adenosine 3',5'-bisphosphate + H(+). It catalyses the reaction glycolithocholate + 3'-phosphoadenylyl sulfate = sulfoglycolithocholate + adenosine 3',5'-bisphosphate + H(+). The catalysed reaction is taurolithocholate + 3'-phosphoadenylyl sulfate = taurolithocholate 3-sulfate + adenosine 3',5'-bisphosphate + H(+). The enzyme catalyses 3beta-hydroxyandrost-5-en-17-one + 3'-phosphoadenylyl sulfate = dehydroepiandrosterone 3-sulfate + adenosine 3',5'-bisphosphate + H(+). In terms of biological role, sulfotransferase that utilizes 3'-phospho-5'-adenylyl sulfate (PAPS) as sulfonate donor to catalyze the sulfonation of the hydroxyl group of hydroxysteroids and bile acids. The sequence is that of Sulfotransferase 2A6 from Mus musculus (Mouse).